The following is a 486-amino-acid chain: Serine/threonine-protein kinase 32C (486 aa).

Positions 1 to 56 (MRSGAERRGSSAAASPGSPPPGRARPAGSDAPSALPPPAAGQPRARDSGDVRSQPR) are disordered. Residues S10, S15, and S18 each carry the phosphoserine modification. The span at 24–33 (ARPAGSDAPS) shows a compositional bias: low complexity. The Protein kinase domain maps to 93 to 353 (FQILRAIGKG…LQDVQAAPAL (261 aa)). Residues 99-107 (IGKGSFGKV) and K122 contribute to the ATP site. The Proton acceptor role is filled by D216. A compositionally biased stretch (basic residues) spans 396–405 (HKKKKRLAKN). Disordered regions lie at residues 396 to 419 (HKKKKRLAKNKSRDNSRDSSQSEN) and 444 to 486 (SQDL…AGSG).

The protein belongs to the protein kinase superfamily. Ser/Thr protein kinase family. Requires Mg(2+) as cofactor.

It carries out the reaction L-seryl-[protein] + ATP = O-phospho-L-seryl-[protein] + ADP + H(+). The catalysed reaction is L-threonyl-[protein] + ATP = O-phospho-L-threonyl-[protein] + ADP + H(+). The chain is Serine/threonine-protein kinase 32C from Homo sapiens (Human).